Here is a 176-residue protein sequence, read N- to C-terminus: Secreted LysM effector ELP2 (176 aa).

The signal sequence occupies residues 1–18 (MQFSIFTVLAAAASFAVA). Low complexity predominate over residues 31-45 (TSAAANPSPTTSGAA). Residues 31 to 50 (TSAAANPSPTTSGAANPSPT) form a disordered region. One can recognise a LysM 1 domain in the interval 58 to 102 (HKTTVKAGQTLTTIAERFHSGICDIAWQNKLENPNVIFVGQVLLV). N-linked (GlcNAc...) asparagine glycosylation is present at N111. Residues 129 to 173 (ATYTIKSGDTFFAVAQSLGITTDSLTGANPGVVPENLQIDQVINV) enclose the LysM 2 domain.

Belongs to the secreted LysM effector family. In terms of assembly, forms homodimers in a chitin-independent manner through interactions at the N-termini of EPL2 monomers. Homodimers are further polymerized in a chitin-dependent manner.

It is found in the secreted. In terms of biological role, secreted effector that enables the plant pathogenic fungus to manipulate host defenses for successful infection. Binds chitin oligomers and polymer with high affinity and plays a dual role, not only in the suppression of chitin-triggered immune responses, but also in appressorium function. Does not protect fungal hyphae against plant chitinases but suppresses chitin-triggered plant immune responses. Chitin-induced polymerization of homodimers forms a contiguous ELP2 highly oligomeric super-complexe that may precipitate at infection sites to eliminate chitin oligomers, and thus suppress the activation of chitin-induced plant immunity. The protein is Secreted LysM effector ELP2 of Colletotrichum higginsianum (strain IMI 349063) (Crucifer anthracnose fungus).